The sequence spans 124 residues: Small ribosomal subunit protein uS13 (124 aa).

The tract at residues 94–124 is disordered; that stretch reads GLPLRGQRTKNNSRTRKGKRKTVANKKKATK. Basic residues predominate over residues 100–124; that stretch reads QRTKNNSRTRKGKRKTVANKKKATK.

This sequence belongs to the universal ribosomal protein uS13 family. Part of the 30S ribosomal subunit. Forms a loose heterodimer with protein S19. Forms two bridges to the 50S subunit in the 70S ribosome.

Located at the top of the head of the 30S subunit, it contacts several helices of the 16S rRNA. In the 70S ribosome it contacts the 23S rRNA (bridge B1a) and protein L5 of the 50S subunit (bridge B1b), connecting the 2 subunits; these bridges are implicated in subunit movement. Contacts the tRNAs in the A and P-sites. The chain is Small ribosomal subunit protein uS13 from Flavobacterium johnsoniae (strain ATCC 17061 / DSM 2064 / JCM 8514 / BCRC 14874 / CCUG 350202 / NBRC 14942 / NCIMB 11054 / UW101) (Cytophaga johnsonae).